Consider the following 420-residue polypeptide: Phospholipase A1-II 3 (420 aa).

Residues 1–21 (MCCFLLVSVLLATTLTDVASA) form the signal peptide. Asparagine 231 carries N-linked (GlcNAc...) asparagine glycosylation. Serine 240 serves as the catalytic Acyl-ester intermediate. Serine 240 serves as the catalytic Charge relay system. An N-linked (GlcNAc...) asparagine glycan is attached at asparagine 294. Active-site charge relay system residues include aspartate 305 and histidine 343. A coiled-coil region spans residues 367–388 (VVDRDLALVNKEVDALRDEYQV). A glycan (N-linked (GlcNAc...) asparagine) is linked at asparagine 403.

This sequence belongs to the AB hydrolase superfamily. Lipase family.

Its subcellular location is the secreted. Functionally, acylhydrolase that catalyzes the hydrolysis of phospholipids at the sn-1 position. This chain is Phospholipase A1-II 3, found in Oryza sativa subsp. japonica (Rice).